The chain runs to 672 residues: uncharacterized protein (672 aa).

It belongs to the MG032/MG096/MG288 family.

This is an uncharacterized protein from Mycoplasma pneumoniae (strain ATCC 29342 / M129 / Subtype 1) (Mycoplasmoides pneumoniae).